Here is a 474-residue protein sequence, read N- to C-terminus: Aspartyl protease family protein At5g10770 (474 aa).

The first 25 residues, 1-25 (MSINRNLLNIIIILCICLNLGCNDG), serve as a signal peptide directing secretion. Residues 132-469 (YIVTVGLGTP…DGAGGRVGFA (338 aa)) form the Peptidase A1 domain. Residues aspartate 150 and aspartate 352 contribute to the active site. Residues cysteine 391 and cysteine 432 are joined by a disulfide bond. Asparagine 443 carries the GPI-anchor amidated asparagine lipid modification. A propeptide spans 444-474 (AAIFGNVQQQTLEVVYDGAGGRVGFAPNGCS) (removed in mature form).

This sequence belongs to the peptidase A1 family.

It localises to the cell membrane. In terms of biological role, probably not redundant with AED1 and not involved in restriction of salicylic acid (SA) or systemic acquired resistance (SAR) signaling. In Arabidopsis thaliana (Mouse-ear cress), this protein is Aspartyl protease family protein At5g10770.